Reading from the N-terminus, the 714-residue chain is MSKQTFTTTFAGKPLVVEVGQVAKQANGATVVRYGESTVLTAAVMSKKMSTGDFFPLQVNYEEKMYAAGKFPGGWMKREGRPSTDATLTARLIDRPIRPMFAEGFRNEVQVINTVLSYDEDASAPMAAMLGSSLALSISDIPFNGPIAGVQVAYVEGEFIINPDKAQQEASLLELTVAGTKDAINMVESGAKELPEAIMLEALLVGHKAIQELIAFQEEIVAAVGKEKAEVELLQVAADLQAEIIETYNADLQQAVQVEEKKAREAATEAVKERVIAAYEERYAADEEHDRIMRDVTEILEQMEHAEVRRLITEDKVRPDGRRVDEIRPLAAEIDFLPMVHGSGLFTRGQTQALSVLTLAPMGDTQIIDGLEPEYKKRFLHHYNFPQYSVGETGRYGAAGRREIGHGALGERALAQVLPSLEEFPYAIRLVAEVLESNGSSSQASICAGTLALMAGGVPIKAPVAGIAMGLISDGTNYTVLTDIQGLEDHFGDMDFKVAGTRQGITALQMDIKIEGITPQILEEALAQAKKARFEILDLIEATIAEPRPELAPTAPKIDTIKIDVDKIKVVIGKGGETIDKIIAETGVKIDIDEEGNVSIYSSDQDAINRAKEIIASLVREAKVGEVYHAKVVRIEKFGAFVNLFDKTDALVHISEIAWSRTANVSDVLEIGEEVDVKVIKVDDKGRIDASMKALVPRPPKPEKSEAKKEGKHD.

Asp489 and Asp495 together coordinate Mg(2+). The region spanning 556–615 (PKIDTIKIDVDKIKVVIGKGGETIDKIIAETGVKIDIDEEGNVSIYSSDQDAINRAKEII) is the KH domain. The S1 motif domain maps to 625-693 (GEVYHAKVVR…DKGRIDASMK (69 aa)). The disordered stretch occupies residues 691–714 (SMKALVPRPPKPEKSEAKKEGKHD). Residues 700–714 (PKPEKSEAKKEGKHD) are compositionally biased toward basic and acidic residues.

This sequence belongs to the polyribonucleotide nucleotidyltransferase family. Mg(2+) is required as a cofactor.

It localises to the cytoplasm. The enzyme catalyses RNA(n+1) + phosphate = RNA(n) + a ribonucleoside 5'-diphosphate. Its function is as follows. Involved in mRNA degradation. Catalyzes the phosphorolysis of single-stranded polyribonucleotides processively in the 3'- to 5'-direction. This is Polyribonucleotide nucleotidyltransferase from Streptococcus equi subsp. zooepidemicus (strain MGCS10565).